We begin with the raw amino-acid sequence, 657 residues long: DNA ligase (657 aa).

80–81 (SL) serves as a coordination point for NAD(+). K104 acts as the N6-AMP-lysine intermediate in catalysis. R125, E159, and K297 together coordinate NAD(+). Residues C386, C389, C406, and C411 each contribute to the Zn(2+) site. The BRCT domain occupies 571–657 (QSEQIFENLN…EWLNNGVRPE (87 aa)).

This sequence belongs to the NAD-dependent DNA ligase family. LigA subfamily. Requires Mg(2+) as cofactor. It depends on Mn(2+) as a cofactor.

The catalysed reaction is NAD(+) + (deoxyribonucleotide)n-3'-hydroxyl + 5'-phospho-(deoxyribonucleotide)m = (deoxyribonucleotide)n+m + AMP + beta-nicotinamide D-nucleotide.. Its function is as follows. DNA ligase that catalyzes the formation of phosphodiester linkages between 5'-phosphoryl and 3'-hydroxyl groups in double-stranded DNA using NAD as a coenzyme and as the energy source for the reaction. It is essential for DNA replication and repair of damaged DNA. In Ruminiclostridium cellulolyticum (strain ATCC 35319 / DSM 5812 / JCM 6584 / H10) (Clostridium cellulolyticum), this protein is DNA ligase.